The primary structure comprises 155 residues: Transcription antitermination protein NusB (155 aa).

The protein belongs to the NusB family.

In terms of biological role, involved in transcription antitermination. Required for transcription of ribosomal RNA (rRNA) genes. Binds specifically to the boxA antiterminator sequence of the ribosomal RNA (rrn) operons. The chain is Transcription antitermination protein NusB from Azoarcus sp. (strain BH72).